We begin with the raw amino-acid sequence, 656 residues long: Sulfate transporter 1.3 (656 aa).

The disordered stretch occupies residues 1–30; that stretch reads MSARAHPVDDDGEISPVERSSPRQANTPYV. Residues 1-94 lie on the Cytoplasmic side of the membrane; it reads MSARAHPVDD…GRKYNLKLFR (94 aa). A helical membrane pass occupies residues 95-115; sequence GDLIAGLTIASLCIPQDIGYA. Topologically, residues 116 to 119 are extracellular; it reads KLAS. A helical transmembrane segment spans residues 120-140; sequence LDPKYGLYSSFVPPLVYACMG. The Cytoplasmic segment spans residues 141–144; sequence SSKD. The helical transmembrane segment at 145–165 threads the bilayer; it reads IAIGPVAVVSLLLGTLLRAEI. At 166 to 176 the chain is on the extracellular side; the sequence is DPNTNPNEYLR. The next 2 helical transmembrane spans lie at 177–197 and 198–218; these read LAFT…FFRL and GFLI…GAAI. At 219–256 the chain is on the extracellular side; the sequence is TIALQQLKGFLGINKFTKKTDIIAVLSSVISSAHHGWN. Residues 257-277 traverse the membrane as a helical segment; sequence WQTILISASFLIFLLISKFIG. Residues 278 to 283 are Cytoplasmic-facing; that stretch reads KRNKKL. Residues 284–304 form a helical membrane-spanning segment; it reads FWIPAIAPLVSVIISTFFVYI. The Extracellular portion of the chain corresponds to 305-342; that stretch reads TRADKKGVQIVKHLDKGLNPSSLRLIYFSGDYLLKGFR. A helical membrane pass occupies residues 343–363; sequence IGVVSGMVALTEAVAIGRTFA. Topologically, residues 364-375 are cytoplasmic; it reads AMKDYQIDGNKE. A helical membrane pass occupies residues 376–396; the sequence is MVALGAMNVIGSMTSCYVSTG. The Extracellular segment spans residues 397 to 412; that stretch reads SFSRSAVNFMAGCQTA. Residues 413-433 traverse the membrane as a helical segment; sequence VSNIIMSIVVLLTLLFLTPLF. The Cytoplasmic segment spans residues 434 to 441; that stretch reads KYTPNAIL. Residues 442–462 form a helical membrane-spanning segment; it reads AAIIINAVIPLVDVNATILIF. Residues 463–473 are Extracellular-facing; that stretch reads KIDKLDFVACM. The helical transmembrane segment at 474–494 threads the bilayer; that stretch reads GAFFGVIFVSVEIGLLIAVGI. Residues 495–656 are Cytoplasmic-facing; that stretch reads SFAKILLQVT…SCSPKLSDEV (162 aa). Residues 525–648 enclose the STAS domain; the sequence is QYPEATRIPG…LTVAEAVDSC (124 aa).

The protein belongs to the SLC26A/SulP transporter (TC 2.A.53) family. As to expression, expressed in the phloem of cotyledons, hypocotyls and roots.

It localises to the membrane. Its function is as follows. High-affinity H(+)/sulfate cotransporter that mediates the loading of sulfate into the sieve tube. Plays a central role in the regulation of sulfate assimilation. The chain is Sulfate transporter 1.3 (SULTR1;3) from Arabidopsis thaliana (Mouse-ear cress).